The chain runs to 258 residues: Agamous-like MADS-box protein AGL3 (258 aa).

Residues 3–57 (RGKVELKRIENKINRQVTFAKRRNGLLKKAYELSVLCDAEIALLIFSNRGKLYEF) enclose the MADS-box domain. The 91-residue stretch at 88-178 (LQDKYQDYLK…RRKLEDSDAA (91 aa)) folds into the K-box domain. Residues 186-214 (SSAAEQQQQHQQQQQGMSSYQSNPPIQEA) form a disordered region. Residues 191–200 (QQQQHQQQQQ) are compositionally biased toward low complexity. The segment covering 201–210 (GMSSYQSNPP) has biased composition (polar residues).

In terms of assembly, forms homodimers. Interacts with TT16/AGL32. In terms of tissue distribution, expressed in aerial vegetative organs and flowers, but not in roots. Expressed in flower primordia.

It is found in the nucleus. In terms of biological role, probable transcription factor that binds specifically to the CArG box DNA sequence 5'-CC (A/T)6 GG-3'. Plays an important role in the determination of flower meristem identity. Involved in the specification of sepal identity. Contributes to the development of petals, stamens and carpels. The protein is Agamous-like MADS-box protein AGL3 (AGL3) of Arabidopsis thaliana (Mouse-ear cress).